The chain runs to 1730 residues: SH3 and multiple ankyrin repeat domains protein 3 (1730 aa).

Residues 1 to 75 (MDGPGASAVV…KFLDEERLLQ (75 aa)) are intramolecular interaction with the ANK repeats. The residue at position 122 (Tyr122) is a Phosphotyrosine. 6 ANK repeats span residues 148–178 (SGECPLSLAAQLDNATDLLKVLRNGGAHLDF), 182–211 (DGLTAVHCATRQRNAGALTTLLDLGASPDY), 215–245 (RGLTPLYHSALGGGDALCCELLLHDHAQLGT), 249–278 (NGWQEIHQACRFGHVQHLEHLLFYGANMGA), 282–311 (SGNTALHICALYNQESCARVLLFRGANKDV), and 315–345 (NSQTAFQVAIIAGNFELAEVIKTHKDSDVVP). Residues 354–466 (KRRRLAGPSG…PPPRGPKRKL (113 aa)) form a disordered region. Phosphoserine is present on residues Ser373, Ser375, Ser387, and Ser394. Basic and acidic residues predominate over residues 404-415 (LQEEKDRDRDGE). Positions 444 to 460 (APGPGPASPAPPAPPPR) are enriched in pro residues. One can recognise an SH3 domain in the interval 470–529 (VPGRKFIAVKAHSPQGEGEIPLHRGEAVKVLSIGEGGFWEGTVKGRTGWFPADCVEEVQM). At Ser482 the chain carries Phosphoserine. Position 555 is a phosphotyrosine (Tyr555). Positions 570–664 (VAILQKRDHE…RLVMKVVSVT (95 aa)) constitute a PDZ domain. Positions 664 to 688 (TRKPEEDGARRRAPPPPKRAPSTTL) are disordered. A required for interaction with ABI1 region spans residues 677-684 (PPPPKRAP). Residues Ser694, Ser781, Ser790, and Ser801 each carry the phosphoserine modification. Disordered regions lie at residues 760-1460 (QGLP…AAGP) and 1475-1524 (GDPV…SLLD). The segment covering 812-844 (IPPPPQTAPPPPPAPYYFDSGPPPTFSPPPPPG) has biased composition (pro residues). Residues 857-869 (GLEARLGAGAAGL) show a composition bias toward low complexity. Residues Ser890 and Ser897 each carry the phosphoserine modification. Position 912 is a phosphothreonine (Thr912). Tyr930 is modified (phosphotyrosine). Residue Arg965 is modified to Asymmetric dimethylarginine. Ser995 is modified (phosphoserine). Positions 1016 to 1026 (VKERRLEERRR) are enriched in basic and acidic residues. Over residues 1078–1092 (LKPLVGGPSLGPSGS) the composition is skewed to low complexity. Over residues 1122–1131 (SQTPSRSPTP) the composition is skewed to polar residues. Phosphothreonine is present on Thr1130. Phosphoserine is present on residues Ser1134, Ser1159, Ser1163, and Ser1166. A compositionally biased stretch (basic and acidic residues) spans 1174-1194 (ARREAEKPPREERKSPEDKKS). Thr1234 carries the phosphothreonine modification. Over residues 1235 to 1250 (PELAPAPMQAAAVAEP) the composition is skewed to low complexity. Composition is skewed to pro residues over residues 1251–1261 (MPSPRAQPPGS) and 1321–1333 (TPPPGPGPLPTTV). Ser1253 bears the Phosphoserine mark. Basic and acidic residues predominate over residues 1360–1370 (ADTRSSSDPHL). Over residues 1371–1392 (ETTSTISTVSSMSTLSSESGEL) the composition is skewed to low complexity. Residues 1410–1416 (PPVPPKP) carry the SH3-binding motif. Ser1420 bears the Phosphoserine mark. Residues 1494 to 1514 (ISELSSRLQQLNKDTRSLGEE) adopt a coiled-coil conformation. Residues 1495 to 1505 (SELSSRLQQLN) show a composition bias toward polar residues. A phosphoserine mark is found at Ser1510, Ser1521, Ser1529, and Ser1539. Disordered regions lie at residues 1546-1584 (ISAQRSPGGPGGGASYSVRPSGRYPVARRAPSPVKPASL) and 1627-1663 (VRSVSARSRSPSPSPLPSPSPGSGPSAGPRRPFQQKP). The segment covering 1627-1637 (VRSVSARSRSP) has biased composition (low complexity). Phosphoserine is present on residues Ser1634, Ser1636, and Ser1638. Over residues 1638–1648 (SPSPLPSPSPG) the composition is skewed to pro residues. Low complexity predominate over residues 1649 to 1658 (SGPSAGPRRP). The 64-residue stretch at 1667–1730 (WSKFDVGDWL…ERALRQLDGS (64 aa)) folds into the SAM domain.

Belongs to the SHANK family. As to quaternary structure, may homomultimerize via its SAM domain. Interacts with BAIAP2, DBNL and SLC17A7/VGLUT1. Interacts with DLGAP1/GKAP, GRM1/MGLUR1, GRM5/MGLUR5 and LZTS3 C-termini via its PDZ domain. Interacts with ABI1, HOMER1, HOMER2, HOMER3 and CTTN/cortactin SH3 domain. Is part of a complex with DLG4/PSD-95 and DLGAP1/GKAP. Interacts (via PDZ domain) with the GRIA1 subunit of the AMPA receptor (via PDZ-binding motif). Interacts with WASF1 and CYFIP2; the interactions mediate the association of SHANK3 with the WAVE1 complex. Interacts with ARPC2; the interaction probably mediates the association of SHANK3 with the Arp2/3 complex. Interacts (via ANK repeats) with SHARPIN and SPTAN1. Interacts (via PDZ domain) with ARHGAP44 (probably via PDZ-binding motif); the interaction takes place in dendritic spines and promotes GRIA1 exocytosis. Interacts with CAMK2A. Interacts with DIP2A. Interacts with ADGRL3. As to expression, in brain, highly expressed in striatum, thalamus, hippocampus and granule cells of the cerebellum.

The protein localises to the cytoplasm. It localises to the synapse. The protein resides in the postsynaptic density. It is found in the cell projection. Its subcellular location is the dendritic spine. Functionally, major scaffold postsynaptic density protein which interacts with multiple proteins and complexes to orchestrate the dendritic spine and synapse formation, maturation and maintenance. Interconnects receptors of the postsynaptic membrane including NMDA-type and metabotropic glutamate receptors via complexes with GKAP/PSD-95 and HOMER, respectively, and the actin-based cytoskeleton. Plays a role in the structural and functional organization of the dendritic spine and synaptic junction through the interaction with Arp2/3 and WAVE1 complex as well as the promotion of the F-actin clusters. By way of this control of actin dynamics, participates in the regulation of developing neurons growth cone motility and the NMDA receptor-signaling. Also modulates GRIA1 exocytosis and GRM5/MGLUR5 expression and signaling to control the AMPA and metabotropic glutamate receptor-mediated synaptic transmission and plasticity. May be required at an early stage of synapse formation and be inhibited by IGF1 to promote synapse maturation. The polypeptide is SH3 and multiple ankyrin repeat domains protein 3 (Shank3) (Mus musculus (Mouse)).